A 458-amino-acid chain; its full sequence is Ribulose bisphosphate carboxylase large chain (458 aa).

N6,N6,N6-trimethyllysine is present on K7. Substrate is bound by residues N116 and T166. Residue K168 is the Proton acceptor of the active site. A substrate-binding site is contributed by K170. Residues K194, D196, and E197 each contribute to the Mg(2+) site. K194 is modified (N6-carboxylysine). The active-site Proton acceptor is H287. Residues R288, H320, and S372 each coordinate substrate.

It belongs to the RuBisCO large chain family. Type I subfamily. Heterohexadecamer of 8 large chains and 8 small chains; disulfide-linked. The disulfide link is formed within the large subunit homodimers. Requires Mg(2+) as cofactor. Post-translationally, the disulfide bond which can form in the large chain dimeric partners within the hexadecamer appears to be associated with oxidative stress and protein turnover.

It localises to the plastid. The protein resides in the chloroplast. The catalysed reaction is 2 (2R)-3-phosphoglycerate + 2 H(+) = D-ribulose 1,5-bisphosphate + CO2 + H2O. The enzyme catalyses D-ribulose 1,5-bisphosphate + O2 = 2-phosphoglycolate + (2R)-3-phosphoglycerate + 2 H(+). In terms of biological role, ruBisCO catalyzes two reactions: the carboxylation of D-ribulose 1,5-bisphosphate, the primary event in carbon dioxide fixation, as well as the oxidative fragmentation of the pentose substrate in the photorespiration process. Both reactions occur simultaneously and in competition at the same active site. This chain is Ribulose bisphosphate carboxylase large chain, found in Gladiolus gueinzii (Coastal gladiolus).